A 394-amino-acid polypeptide reads, in one-letter code: MIIKNAGQIITFDSEGNFKLIKDKSIVIENNIISDITDNKNNDDAIDASNMVVMPGFIDSHTHLAYAGTRENELYMRSHGQSYLDILNLGGGIHKTMNDTESSGEDKIFNETIKRVDESILNGTTYLEIKSGYGKTINGERRLINAIKRIKSIYRNVKITLLAHAVPDNINEYDYAGYFINNMIPAFKNDVDFLDVFCDAGAFSRKSTEMILEAGVSSRLKLKIHADELKNIGCIDLCKRFNFTSVDHLLNTRNDQLNYIKDSGAVATILPVTAFSLDSDYVNAQRFINKKIDVAIASDASPASYNSNMIFAIYLAVRYCNISLENAIKAATINGARSLKIDESTGSIEPGKNADLIILDIDDYKKLPYMYMSRLVRYSFINGIKIVDNFNLIH.

The Fe(3+) site is built by histidine 61 and histidine 63. Zn(2+) is bound by residues histidine 61 and histidine 63. Residues arginine 70, tyrosine 133, and histidine 164 each contribute to the 4-imidazolone-5-propanoate site. Residue tyrosine 133 participates in N-formimidoyl-L-glutamate binding. Histidine 225 is a binding site for Fe(3+). Histidine 225 is a Zn(2+) binding site. Glutamate 228 is a 4-imidazolone-5-propanoate binding site. Aspartate 299 contacts Fe(3+). Residue aspartate 299 coordinates Zn(2+).

It belongs to the metallo-dependent hydrolases superfamily. HutI family. Requires Zn(2+) as cofactor. Fe(3+) is required as a cofactor.

The protein resides in the cytoplasm. It carries out the reaction 4-imidazolone-5-propanoate + H2O = N-formimidoyl-L-glutamate. It functions in the pathway amino-acid degradation; L-histidine degradation into L-glutamate; N-formimidoyl-L-glutamate from L-histidine: step 3/3. Its function is as follows. Catalyzes the hydrolytic cleavage of the carbon-nitrogen bond in imidazolone-5-propanoate to yield N-formimidoyl-L-glutamate. It is the third step in the universal histidine degradation pathway. The chain is Imidazolonepropionase from Picrophilus torridus (strain ATCC 700027 / DSM 9790 / JCM 10055 / NBRC 100828 / KAW 2/3).